A 178-amino-acid polypeptide reads, in one-letter code: Adenine phosphoribosyltransferase (178 aa).

Belongs to the purine/pyrimidine phosphoribosyltransferase family. As to quaternary structure, homodimer.

The protein resides in the cytoplasm. The enzyme catalyses AMP + diphosphate = 5-phospho-alpha-D-ribose 1-diphosphate + adenine. The protein operates within purine metabolism; AMP biosynthesis via salvage pathway; AMP from adenine: step 1/1. In terms of biological role, catalyzes a salvage reaction resulting in the formation of AMP, that is energically less costly than de novo synthesis. This Bacteroides fragilis (strain ATCC 25285 / DSM 2151 / CCUG 4856 / JCM 11019 / LMG 10263 / NCTC 9343 / Onslow / VPI 2553 / EN-2) protein is Adenine phosphoribosyltransferase.